The chain runs to 140 residues: MEDFNFGRELRLLTPSHYSRIFNEPARAATPFFTLLAKPNDQDQPRLGLTVAKKRVKKACQRNRIKRLARECFRLNKHNIDNIDIVLMVKSGIDEQSNEELTKQLTKLWRKINERCKPGAPKPPPFKKRPNKSVKSNKQT.

The tract at residues 115-140 (RCKPGAPKPPPFKKRPNKSVKSNKQT) is disordered.

Belongs to the RnpA family. As to quaternary structure, consists of a catalytic RNA component (M1 or rnpB) and a protein subunit.

It catalyses the reaction Endonucleolytic cleavage of RNA, removing 5'-extranucleotides from tRNA precursor.. Its function is as follows. RNaseP catalyzes the removal of the 5'-leader sequence from pre-tRNA to produce the mature 5'-terminus. It can also cleave other RNA substrates such as 4.5S RNA. The protein component plays an auxiliary but essential role in vivo by binding to the 5'-leader sequence and broadening the substrate specificity of the ribozyme. This is Ribonuclease P protein component from Pseudoalteromonas translucida (strain TAC 125).